Here is a 327-residue protein sequence, read N- to C-terminus: Methionyl-tRNA formyltransferase (327 aa).

121–124 (SLLP) is a binding site for (6S)-5,6,7,8-tetrahydrofolate.

The protein belongs to the Fmt family.

The catalysed reaction is L-methionyl-tRNA(fMet) + (6R)-10-formyltetrahydrofolate = N-formyl-L-methionyl-tRNA(fMet) + (6S)-5,6,7,8-tetrahydrofolate + H(+). Functionally, attaches a formyl group to the free amino group of methionyl-tRNA(fMet). The formyl group appears to play a dual role in the initiator identity of N-formylmethionyl-tRNA by promoting its recognition by IF2 and preventing the misappropriation of this tRNA by the elongation apparatus. This is Methionyl-tRNA formyltransferase from Burkholderia mallei (strain ATCC 23344).